The following is a 464-amino-acid chain: Glycine--tRNA ligase (464 aa).

The substrate site is built by Arg104 and Glu175. ATP contacts are provided by residues 207–209, 217–222, 292–293, and 336–339; these read RNE, FRTREF, EL, and GVNR. 222 to 226 contributes to the substrate binding site; sequence FEQME. 332–336 lines the substrate pocket; sequence EPALG.

It belongs to the class-II aminoacyl-tRNA synthetase family. In terms of assembly, homodimer.

It is found in the cytoplasm. The catalysed reaction is tRNA(Gly) + glycine + ATP = glycyl-tRNA(Gly) + AMP + diphosphate. Its function is as follows. Catalyzes the attachment of glycine to tRNA(Gly). The protein is Glycine--tRNA ligase of Leptospira interrogans serogroup Icterohaemorrhagiae serovar Lai (strain 56601).